A 205-amino-acid polypeptide reads, in one-letter code: uncharacterized protein (205 aa).

Helical transmembrane passes span 5–25, 41–61, 68–88, 117–137, and 147–167; these read VWLA…SGTV, GAII…GIGI, SALA…WLGI, LINL…PQFI, and FLVL…GYTA.

Belongs to the Rht family.

It localises to the cell inner membrane. Involved in positive regulation of motility and negative regulation of biofilm formation. This is an uncharacterized protein from Vibrio cholerae serotype O1 (strain ATCC 39315 / El Tor Inaba N16961).